The primary structure comprises 1316 residues: Tetratricopeptide repeat protein 21B (1316 aa).

TPR repeat units lie at residues 108 to 141 (EKAL…SDGS), 145 to 178 (HVLK…GNDT), 180 to 211 (ALLG…FPSF), 285 to 323 (AQLF…NPQQ), 324 to 357 (SEFA…DETS), 492 to 525 (LQTV…NPSY), 563 to 596 (PLYH…PGMK), 617 to 650 (LSIF…FSGT), 722 to 755 (PRSF…NPKD), 757 to 789 (TLAS…GQKN), 791 to 822 (LCYD…EPVN), 831 to 864 (GRCQ…QARV), 884 to 917 (AEIC…CETD), 919 to 951 (KIML…DQDN), 952 to 985 (EAAT…KPDN), 1023 to 1056 (PGFQ…RDWG), 1197 to 1230 (EKSW…NRSC), 1232 to 1264 (KAYE…SNRT), and 1266 to 1299 (PAVG…HPTY).

It belongs to the TTC21 family. As to quaternary structure, component of the IFT complex A (IFT-A) complex. IFT-A complex is divided into a core subcomplex composed of IFT122:IFT140:WDR19 which is associated with TULP3 and a peripheral subcomplex composed of IFT43:WDR35:TTC21B. Interacts directy with WDR35 and TTC21B. Interacts with TTC25.

It is found in the cytoplasm. The protein resides in the cytoskeleton. It localises to the cilium axoneme. Functionally, component of the IFT complex A (IFT-A), a complex required for retrograde ciliary transport and entry into cilia of G protein-coupled receptors (GPCRs). Essential for retrograde trafficking of IFT-1, IFT-B and GPCRs. Negatively modulates the SHH signal transduction. This chain is Tetratricopeptide repeat protein 21B, found in Homo sapiens (Human).